We begin with the raw amino-acid sequence, 259 residues long: DNA-directed RNA polymerase 30 kDa polypeptide (259 aa).

The TFIIS-type zinc-finger motif lies at 155 to 195 (YNTPCPNCKSRNTTPMMIQTRAADEPPLVRHACRDCKQHFK). Zn(2+)-binding residues include C159, C162, C187, and C190. Residues 220 to 259 (EILPDNNPSPPESPEPASPIDDGLIRATFDRNDEPPEDDE) form a disordered region. Residues 226 to 236 (NPSPPESPEPA) show a composition bias toward pro residues.

Belongs to the poxviridae DNA-directed RNA polymerase 30 kDa subunit family. As to quaternary structure, the DNA-dependent RNA polymerase (vRNAP) consists of eight subunits encoded by early viral genes and termed according to their apparent molecular masses Rpo147, Rpo132, Rpo35, Rpo30, Rpo22, Rpo19, Rpo18, and Rpo7. The same holoenzyme, with the addition of the transcription-specificity factor RAP94, is used for early gene expression.

It is found in the virion. The protein resides in the host cytoplasm. The catalysed reaction is RNA(n) + a ribonucleoside 5'-triphosphate = RNA(n+1) + diphosphate. In terms of biological role, part of the DNA-dependent RNA polymerase which catalyzes the transcription of viral DNA into RNA using the four ribonucleoside triphosphates as substrates. Responsible for the transcription of early, intermediate and late genes. DNA-dependent RNA polymerase associates with the early transcription factor (ETF), itself composed of OPG118 and OPG134, thereby allowing the early genes transcription. Late transcription, and probably also intermediate transcription, require newly synthesized RNA polymerase. This chain is DNA-directed RNA polymerase 30 kDa polypeptide (OPG066), found in Monkeypox virus.